A 539-amino-acid polypeptide reads, in one-letter code: Probable malate:quinone oxidoreductase (539 aa).

This sequence belongs to the MQO family. It depends on FAD as a cofactor.

It carries out the reaction (S)-malate + a quinone = a quinol + oxaloacetate. Its pathway is carbohydrate metabolism; tricarboxylic acid cycle; oxaloacetate from (S)-malate (quinone route): step 1/1. The protein is Probable malate:quinone oxidoreductase of Sodalis glossinidius (strain morsitans).